A 233-amino-acid polypeptide reads, in one-letter code: Large ribosomal subunit protein uL1 (233 aa).

The protein belongs to the universal ribosomal protein uL1 family. Part of the 50S ribosomal subunit.

Binds directly to 23S rRNA. The L1 stalk is quite mobile in the ribosome, and is involved in E site tRNA release. Its function is as follows. Protein L1 is also a translational repressor protein, it controls the translation of the L11 operon by binding to its mRNA. The sequence is that of Large ribosomal subunit protein uL1 from Proteus mirabilis (strain HI4320).